We begin with the raw amino-acid sequence, 28 residues long: Aryl acylamidase (28 aa).

Homodimer.

The catalysed reaction is an anilide + H2O = aniline + a carboxylate + H(+). The polypeptide is Aryl acylamidase (Nocardia globerula).